A 358-amino-acid chain; its full sequence is Secreted protein RBT4 (358 aa).

The N-terminal stretch at 1–19 is a signal peptide; it reads MKFSQVATTAAIFAGLTTA. Composition is skewed to low complexity over residues 48–63, 153–174, and 189–200; these read VTGG…QSAA, TTEV…VATP, and AATTASGSSSGS. Disordered stretches follow at residues 48-98 and 144-203; these read VTGG…DGGN and GFPS…SNDF. Residues 216 to 332 enclose the SCP domain; sequence LDAHNKKRAR…NWGLYVVCSY (117 aa).

It belongs to the CRISP family.

It is found in the secreted. Secreted protein that acts as a virulence factor during infections such as in posttraumatic corneal infections. Acts as an important antigen in patients with systemic candidiasis and plays a role in the protection against phagocyte attack. This is Secreted protein RBT4 (RBT4) from Candida albicans (strain SC5314 / ATCC MYA-2876) (Yeast).